Here is a 2374-residue protein sequence, read N- to C-terminus: MNLDSLSLALSQISYLVDNLTKKNYRASQQEIQHIVNRHGPEADRHLLRCLFSHVDFSGDGKSSGKDFHQTQFLIQECVSLITKPNFISTLCYAIDNPLHYQKSLKPSPHLFTQLSKVLKLSKVQEVILGLALSNSSNADLRGFAAQFVKQKLPDLLRSYVDADLGGNQEGGFQDIAIEVLHLLLSHLLFGQKGSSGVGQEQIDAFLKTLCRDFPQERCPVVLAPLLYPDKRDILMDRILPDSGDLNKTMMESSLADFMQEVGYGFCASLEECRNIILQYGVREVTASQVARVLGMMARTHSGLSDGISLQTITNPVGGGGIWSDGKDKSDSSQAWNVEVLIDVVKEVNPNLNFKEVTYELDHPGFLIRDSKGLQIVVYGIQRGLGMEVFPVDLIYRPWKHAEGQLSFIQHSLLSPEVFCFADNPCHTVAIDTLKAPPEDDNREIATWKSLDLVESLLRLSEVGHYEQVKQLFSFPIKHCPDMLVLALLQISTSWHTLRHELISTLMPIFLGNHPNSAIILHYAWHGQGQSPSIRQLIMHSMAEWYMRGEQYDQAKLSRILDVAQDLKSLSMLLNGTPFAFVIDLAALASRREYLKLDKWLTDKIREHGEPFIQACVTFLKRRCPSIMGGLAPEKDQPKSAQLPPETLATMLACLQSCAGSVSQELSETILTMVANCSNVMNKARQPPPGVLPKGRAPSTSSLDAISPVQMDPLSAMGSLSLGVSSTSHTPSMQGFPSLQGSAFSNPQSPAKAFSNLPNPNPSTAFPGINPLSSQLQGPLSTSLSGIGSGLGMPTVSSDVFSARKMSTPGLNPPTFQQTDLSQVWPEANQHFSKEIDDEANSYFQRIYNHPPHPTMSVDEVLEMLQRFKDSNIKREREVFNCMLRNLFEEYRFFPQYPDKELHITACLFGGIIEKGLVTYMALGLALRYVLEALRKPFGSKMYYFGIAALDRFKNRLKDYPQYCQHLASIAHFLQFPHHLQEYIEYGQQSRDPPVKMQGSITTPGSLALAQAQAQSQPPKAPQPGQASTLVTTATTTTTAAKTTTITRPTAVGPKKDVPPSINTTNIDTLLVATDQTERIVEPPENVQEKIAFIFNNLSQSNMSQKVEELKETVKEEFMPWVSQYLVMKRVSIEPNFHSLYSNFLDTLKNPEFVKMVLNETYRNIKVLLTSDKAAANFSDRSLLKNLGHWLGMITLAKNKPILYTDLELKSLLLEAYVKGQQELLYVVPFVAKVLESSLRSVIFRPQNPWTMGIMNVLAELHQEHDLKLNLKFEIEVLCKNLSMDITDLKPGNLLRDKDKLKTLEEQLSAPKKETKPPEELLPIVTTDSVPFTAAPSTPATTTACTATGPPTPQFSYHDINVYALAGLAPHININVNIPLLQAHPQLKQCVRPAIERAVQELVHPVVDRSIKIAMTTCEQIVRKDFALDSEESHMRVAAHHMMRNLTAGMAMITCREPLLMSIATNLKNSFAAALRAPTPQQREMMEEAAARIAQDNCELACCFIQKTAVEKAGPEMDKRLATEFELRKHARQEGRRYCDPMVLTYQAERMPEQIRLKVGGVDPKQLAVYEEFARNVPGFLPSNDLSQPTGFLAQPMKQQAWPTDDVAHIYEKCISDLEQHLHAIPPALAMNPQTQAIRSLLEAVVMARNSRDGIAALGLLQKAVEGLLDATSGADPELLLSYRECHLLVLKALQDGRAYGPQWCNKQITRCLIECRDEYKYNVEAVELLIRNHLVNMQQYDLHLAQSMENGLNYMAVAFAMQLVKLLLVDERSVSHITEADLFHTIETLMRTSAHSRANAPEGLPQLMDVVRSNYEAMIDRHHGGPNFMMHSGISQASEYDDPPGLREKAEYLLREWVNLYHSAAAGRDSTKAFSAFVGQMHQQGILKTDDLITRFFRLCTEMCVEISYRAQAEQQHPTTSPAIIRAKCYHNLDAFVRLIALLVKHSGEATNTVTKINLLNKVLGIVVGVLIQDHDVRQTEFQQLPYHRIFIMLLLELNAPEHVLETINFQTLTAFCNTFHILRPTKAPGFVYAWLELISHRIFIARMLAHTPQQKGWPMYAQLLIDLFKYLAPFLRNVELNKPMQILYKGTLRVLLVLLHDFPEFLCDYHYGFCDVIPPNCIQLRNLILSAFPRNMRLPDPFTPNLKVDMLSEINIAPRILTNFTGVMPSQFKKDLDSYLKTRSPVTFLSELRSNLQVSNEPGNRYNIQLINALVPYVGTQAIAHIHNKGSTPSMSTITHSAHMDIFQNLAVDLDTEGRYLFLNAIANQLRYPNSHTHYFSCTMLYLFAEANAEAIQEQITRVLLERLIVNRPHPWGLLITFIELIKNPAFKFWSHDFVHCAPEIEKLFQSVAQCCMGQKQAQQVMEGTGAS.

4 short sequence motifs (LXXLL) span residues 153 to 157 (LPDLL), 181 to 185 (LHLLL), 223 to 227 (LAPLL), and 570 to 574 (LSMLL). A compositionally biased stretch (low complexity) spans 1009-1051 (LAQAQAQSQPPKAPQPGQASTLVTTATTTTTAAKTTTITRPTA). The disordered stretch occupies residues 1009 to 1060 (LAQAQAQSQPPKAPQPGQASTLVTTATTTTTAAKTTTITRPTAVGPKKDVPP). Residues 1082–1604 (EPPENVQEKI…QPMKQQAWPT (523 aa)) are interaction with CCR4-NOT complex catalytic subunits. 3 consecutive short sequence motifs (LXXLL) follow at residues 1638-1642 (IRSLL), 1940-1944 (LIALL), and 2094-2098 (LRVLL).

It belongs to the CNOT1 family. As to quaternary structure, component of the CCR4-NOT complex.

It localises to the cytoplasm. Its subcellular location is the nucleus. Functionally, scaffolding component of the CCR4-NOT complex which is one of the major cellular mRNA deadenylases and is linked to various cellular processes including bulk mRNA degradation, miRNA-mediated repression, translational repression during translational initiation and general transcription regulation. Additional complex functions may be a consequence of its influence on mRNA expression. Its scaffolding function implies its interaction with the catalytic complex module and diverse RNA-binding proteins mediating the complex recruitment to selected mRNA 3'UTRs. Acts as a transcriptional repressor. Represses the ligand-dependent transcriptional activation by nuclear receptors. The polypeptide is CCR4-NOT transcription complex subunit 1 (cnot1) (Danio rerio (Zebrafish)).